We begin with the raw amino-acid sequence, 248 residues long: Probable transcriptional regulatory protein PHZ_c3068 (248 aa).

The protein belongs to the TACO1 family.

It is found in the cytoplasm. The protein is Probable transcriptional regulatory protein PHZ_c3068 of Phenylobacterium zucineum (strain HLK1).